Here is a 2193-residue protein sequence, read N- to C-terminus: Genome polyprotein (2193 aa).

Positions 1-22 (MGSQVSTQRSGSHENSNSATEG) are disordered. Residue Gly-2 is the site of N-myristoyl glycine; by host attachment. The Cytoplasmic portion of the chain corresponds to 2-1503 (GSQVSTQRSG…HLNRAVLVMQ (1502 aa)). The interval 568–588 (RVADVIESSIGDSVSRALTQA) is amphipathic alpha-helix. Catalysis depends on for protease 2A activity residues His-883 and Asp-901. 2 residues coordinate Zn(2+): Cys-918 and Cys-920. Cys-972 functions as the For protease 2A activity in the catalytic mechanism. Zn(2+) contacts are provided by Cys-978 and His-980. Positions 1216-1374 (EKRMNNYMQF…SKTDLGRLDA (159 aa)) constitute an SF3 helicase domain. Position 1240-1247 (1240-1247 (GSPGTGKS)) interacts with ATP. Residues Cys-1381, Cys-1392, and Cys-1397 each contribute to the Zn(2+) site. The C4-type; degenerate zinc-finger motif lies at 1381–1397 (CSENNTANFKRCSPLVC). The stretch at 1504-1519 (SIATVVAVVSLVYVIY) is an intramembrane region. The Cytoplasmic portion of the chain corresponds to 1520-2193 (KLFAGFQGAY…NLRRNWLELF (674 aa)). Position 1529 is an O-(5'-phospho-RNA)-tyrosine (Tyr-1529). In terms of domain architecture, Peptidase C3 spans 1549–1727 (GPSLDFALSL…FCAGLKRSYF (179 aa)). Catalysis depends on for protease 3C activity residues His-1588, Glu-1619, and Cys-1695. A RdRp catalytic domain is found at 1958-2073 (GSLFAFDYSG…ASYPFPIDCL (116 aa)). Residues Asp-1964 and Asp-2060 each coordinate Mg(2+).

It belongs to the picornaviruses polyprotein family. In terms of assembly, interacts with capsid protein VP1 and capsid protein VP3 to form heterotrimeric protomers. As to quaternary structure, interacts with capsid protein VP0, and capsid protein VP3 to form heterotrimeric protomers. Five protomers subsequently associate to form pentamers which serve as building blocks for the capsid. Interacts with capsid protein VP2, capsid protein VP3 and capsid protein VP4 following cleavage of capsid protein VP0. Interacts with host SCARB2. Interacts with host ARF6; this interaction mediates viral endocytosis. Interacts with capsid protein VP1 and capsid protein VP3 in the mature capsid. Interacts with host SCARB2. In terms of assembly, interacts with capsid protein VP0 and capsid protein VP1 to form heterotrimeric protomers. Five protomers subsequently associate to form pentamers which serve as building blocks for the capsid. Interacts with capsid protein VP4 in the mature capsid. Interacts with protein 2C; this interaction may be important for virion morphogenesis. As to quaternary structure, interacts with capsid protein VP1 and capsid protein VP3. Homodimer. In terms of assembly, interacts with host BAX; this interaction activates the mitochondrial apoptotic pathway. Interacts with host ILF2. As to quaternary structure, homohexamer; forms a hexameric ring structure with 6-fold symmetry characteristic of AAA+ ATPases. Interacts (via N-terminus) with host RTN3 (via reticulon domain); this interaction is important for viral replication. Interacts with capsid protein VP3; this interaction may be important for virion morphogenesis. Interacts with protein 3CD. In terms of assembly, homodimer. Interacts with host GBF1. Interacts (via GOLD domain) with host ACBD3 (via GOLD domain); this interaction allows the formation of a viral protein 3A/ACBD3 heterotetramer with a 2:2 stoichiometry, which will stimulate the recruitment of host PI4KB in order to synthesize PI4P at the viral RNA replication sites. As to quaternary structure, interacts with RNA-directed RNA polymerase. Interacts with host IFIH1/MDA5; this interaction inhibits host IFIH1. In terms of assembly, interacts with protein 3AB and with RNA-directed RNA polymerase. As to quaternary structure, interacts with Viral protein genome-linked and with protein 3CD. It depends on Mg(2+) as a cofactor. Post-translationally, specific enzymatic cleavages in vivo by the viral proteases yield processing intermediates and the mature proteins. In terms of processing, myristoylation is required for the formation of pentamers during virus assembly. Further assembly of 12 pentamers and a molecule of genomic RNA generates the provirion. During virion maturation, immature virions are rendered infectious following cleavage of VP0 into VP4 and VP2. This maturation seems to be an autocatalytic event triggered by the presence of RNA in the capsid and it is followed by a conformational change infectious virion. Post-translationally, myristoylation is required during RNA encapsidation and formation of the mature virus particle. In terms of processing, VPg is uridylylated by the polymerase into VPg-pUpU. This acts as a nucleotide-peptide primer for the genomic RNA replication.

It is found in the virion. The protein localises to the host cytoplasm. The protein resides in the host cytoplasmic vesicle membrane. Its subcellular location is the host nucleus. It carries out the reaction a ribonucleoside 5'-triphosphate + H2O = a ribonucleoside 5'-diphosphate + phosphate + H(+). The catalysed reaction is Selective cleavage of Tyr-|-Gly bond in the picornavirus polyprotein.. It catalyses the reaction RNA(n) + a ribonucleoside 5'-triphosphate = RNA(n+1) + diphosphate. The enzyme catalyses Selective cleavage of Gln-|-Gly bond in the poliovirus polyprotein. In other picornavirus reactions Glu may be substituted for Gln, and Ser or Thr for Gly.. Replication or transcription is subject to high level of random mutations by the nucleotide analog ribavirin. Functionally, forms an icosahedral capsid of pseudo T=3 symmetry with capsid proteins VP2 and VP3. The capsid is 300 Angstroms in diameter, composed of 60 copies of each capsid protein and enclosing the viral positive strand RNA genome. Capsid protein VP1 mainly forms the vertices of the capsid. Capsid protein VP1, together with VP2, interacts with host cell receptor SCARB2 to provide virion attachment to target host cells. This attachment induces virion internalization. After binding to its receptor, the capsid undergoes conformational changes. Capsid protein VP1 N-terminus (that contains an amphipathic alpha-helix) and capsid protein VP4 are externalized. Together, they shape a pore in the host membrane through which viral genome is translocated to host cell cytoplasm. In terms of biological role, forms an icosahedral capsid of pseudo T=3 symmetry with capsid proteins VP2 and VP3. The capsid is 300 Angstroms in diameter, composed of 60 copies of each capsid protein and enclosing the viral positive strand RNA genome. Capsid protein VP2, together with VP1, interacts with host cell receptor SCARB2 to provide virion attachment to target host cells. Forms an icosahedral capsid of pseudo T=3 symmetry with capsid proteins VP2 and VP3. The capsid is 300 Angstroms in diameter, composed of 60 copies of each capsid protein and enclosing the viral positive strand RNA genome. Its function is as follows. Lies on the inner surface of the capsid shell. After binding to the host receptor, the capsid undergoes conformational changes. Capsid protein VP4 is released, Capsid protein VP1 N-terminus is externalized, and together, they shape a pore in the host membrane through which the viral genome is translocated into the host cell cytoplasm. Functionally, component of immature procapsids, which is cleaved into capsid proteins VP4 and VP2 after maturation. Allows the capsid to remain inactive before the maturation step. In terms of biological role, cysteine protease that cleaves viral polyprotein and specific host proteins. It is responsible for the autocatalytic cleavage between the P1 and P2 regions, which is the first cleavage occurring in the polyprotein. Also cleaves the host translation initiation factor EIF4G1, in order to shut down the capped cellular mRNA translation. Inhibits the host nucleus-cytoplasm protein and RNA trafficking by cleaving host members of the nuclear pores. Counteracts stress granule formation probably by antagonizing its assembly or promoting its dissassembly. Cleaves and inhibits host IFIH1/MDA5, thereby inhibiting the type-I IFN production and the establishment of the antiviral state. Cleaves and inhibits host MAVS, thereby inhibiting the type-I IFN production and the establishment of the antiviral state. Plays an essential role in the virus replication cycle by acting as a viroporin. Creates a pore in the host endoplasmic reticulum and as a consequence releases Ca2+ in the cytoplasm of infected cell. In turn, high levels of cytoplasmic calcium may trigger membrane trafficking and transport of viral ER-associated proteins to viroplasms, sites of viral genome replication. Its function is as follows. Induces and associates with structural rearrangements of intracellular membranes. Displays RNA-binding, nucleotide binding and NTPase activities. May play a role in virion morphogenesis and viral RNA encapsidation by interacting with the capsid protein VP3. Functionally, localizes the viral replication complex to the surface of membranous vesicles. Together with protein 3CD binds the Cis-Active RNA Element (CRE) which is involved in RNA synthesis initiation. Acts as a cofactor to stimulate the activity of 3D polymerase, maybe through a nucleid acid chaperone activity. In terms of biological role, localizes the viral replication complex to the surface of membranous vesicles. It inhibits host cell endoplasmic reticulum-to-Golgi apparatus transport and causes the disassembly of the Golgi complex, possibly through GBF1 interaction. This would result in depletion of MHC, trail receptors and IFN receptors at the host cell surface. Plays an essential role in viral RNA replication by recruiting ACBD3 and PI4KB at the viral replication sites, thereby allowing the formation of the rearranged membranous structures where viral replication takes place. Acts as a primer for viral RNA replication and remains covalently bound to viral genomic RNA. VPg is uridylylated prior to priming replication into VPg-pUpU. The oriI viral genomic sequence may act as a template for this. The VPg-pUpU is then used as primer on the genomic RNA poly(A) by the RNA-dependent RNA polymerase to replicate the viral genome. During genome replication, the VPg-RNA linkage is removed by the host TDP2, thereby accelerating replication. During the late stage of the replication cycle, host TDP2 is excluded from sites of viral RNA synthesis and encapsidation, allowing for the generation of progeny virions. Its function is as follows. Involved in the viral replication complex and viral polypeptide maturation. It exhibits protease activity with a specificity and catalytic efficiency that is different from protease 3C. Protein 3CD lacks polymerase activity. Protein 3CD binds to the 5'UTR of the viral genome. Functionally, major viral protease that mediates proteolytic processing of the polyprotein. Cleaves host EIF5B, contributing to host translation shutoff. Also cleaves host PABPC1, contributing to host translation shutoff. Disassembles host cytoplasmic stress granules by cleaving host G3BP1, although this effect is less prononced than the inhibition induced by protease 2A. Cleaves host RIGI and thus contributes to the inhibition of type I interferon production. Cleaves host IRF7 and thus contributes to the inhibition of type I interferon production. Cleaves host HNRNPA1 thereby increasing the translation of apoptosis protease activating factor APAF1, leading to apoptosis of the host cell. Cleaves host NLRP1, triggers host N-glycine-mediated degradation of the autoinhibitory NLRP1 N-terminal fragment. In terms of biological role, replicates the viral genomic RNA on the surface of intracellular membranes. May form linear arrays of subunits that propagate along a strong head-to-tail interaction called interface-I. Covalently attaches UMP to a tyrosine of VPg, which is used to prime RNA synthesis. The positive stranded RNA genome is first replicated at virus induced membranous vesicles, creating a dsRNA genomic replication form. This dsRNA is then used as template to synthesize positive stranded RNA genomes. ss(+)RNA genomes are either translated, replicated or encapsidated. The chain is Genome polyprotein from Human enterovirus 71 (strain 7423/MS/87) (EV71).